The primary structure comprises 208 residues: Protein-L-isoaspartate O-methyltransferase (208 aa).

Ser-59 is a catalytic residue.

This sequence belongs to the methyltransferase superfamily. L-isoaspartyl/D-aspartyl protein methyltransferase family.

The protein resides in the cytoplasm. It catalyses the reaction [protein]-L-isoaspartate + S-adenosyl-L-methionine = [protein]-L-isoaspartate alpha-methyl ester + S-adenosyl-L-homocysteine. In terms of biological role, catalyzes the methyl esterification of L-isoaspartyl residues in peptides and proteins that result from spontaneous decomposition of normal L-aspartyl and L-asparaginyl residues. It plays a role in the repair and/or degradation of damaged proteins. The sequence is that of Protein-L-isoaspartate O-methyltransferase from Aliivibrio salmonicida (strain LFI1238) (Vibrio salmonicida (strain LFI1238)).